The primary structure comprises 388 residues: MSQVIFSVDRGGAEPGAEMDDEMTLNMGPHHPSTHGVLRFVISTDGEIIRKAVPDVGYLHRSIEKIGERCTYSGFMPYTDRVDYIAAMFANEAWASACEKLMGIEVPKRAQYLRVISCELNRIGSHMIALGAMAMDVGAVTPFPWALREREYINDFIEELCGARLTFNYHRIGGVSFDMPKGWADKVKHWLDRFEPIMVEFDRLISLNDIFIKRLANVAVVTAEEAKDWGLVGPNLRGSGVKWDLRKEDAYSVYPELEFDVPVGRGRYGTVGDCWDRFYVRVEECRESAKILRQALDKIDEHPEDDILGKLPKKMRPDGEAYARIESARGDMGCYVIGRGAEEAYRARFRTGSFTAMAMIEAKSPGLFLADLVALIASFDVVAPEIDR.

This sequence belongs to the complex I 49 kDa subunit family. As to quaternary structure, NDH-1 is composed of 14 different subunits. Subunits NuoB, C, D, E, F, and G constitute the peripheral sector of the complex.

It localises to the cell inner membrane. The catalysed reaction is a quinone + NADH + 5 H(+)(in) = a quinol + NAD(+) + 4 H(+)(out). In terms of biological role, NDH-1 shuttles electrons from NADH, via FMN and iron-sulfur (Fe-S) centers, to quinones in the respiratory chain. The immediate electron acceptor for the enzyme in this species is believed to be ubiquinone. Couples the redox reaction to proton translocation (for every two electrons transferred, four hydrogen ions are translocated across the cytoplasmic membrane), and thus conserves the redox energy in a proton gradient. This chain is NADH-quinone oxidoreductase subunit D 2, found in Sorangium cellulosum (strain So ce56) (Polyangium cellulosum (strain So ce56)).